Here is a 382-residue protein sequence, read N- to C-terminus: Apolipoprotein A-IV (382 aa).

The N-terminal stretch at 1 to 20 is a signal peptide; that stretch reads MFLKAVVLTLSLVAVTGAQA. 13 consecutive repeat copies span residues 33–54, 60–81, 82–103, 115–136, 137–158, 159–180, 181–202, 203–224, 225–246, 247–268, 269–286, 287–308, and 309–330. Residues 33–330 are 13 X 22 AA approximate tandem repeats; sequence DYFSQLSNNA…QVEELRQKLG (298 aa).

It belongs to the apolipoprotein A1/A4/E family. Homodimer. Phosphorylation sites are present in the extracellular medium.

It localises to the secreted. Its function is as follows. May have a role in chylomicrons and VLDL secretion and catabolism. Required for efficient activation of lipoprotein lipase by ApoC-II; potent activator of LCAT. Apoa-IV is a major component of HDL and chylomicrons. The protein is Apolipoprotein A-IV (APOA4) of Mirounga angustirostris (Northern elephant seal).